The primary structure comprises 723 residues: ABC transporter F family member 4 (723 aa).

A disordered region spans residues 1–117; sequence MGKKKSDESA…KEQKKREAKE (117 aa). The segment covering 18-31 has biased composition (basic and acidic residues); it reads SGKDASKDSKKEKL. Polar residues predominate over residues 50–65; it reads GSSSRTKAAPKSTSYT. Residues 72-84 show a composition bias toward acidic residues; that stretch reads PSDEEDDGESDEE. The segment covering 95–117 has biased composition (basic and acidic residues); sequence KSEQRHLEISVTDKEQKKREAKE. The 261-residue stretch at 163–423 folds into the ABC transporter 1 domain; that stretch reads ITIESFSVSA…EMNKKFDVYD (261 aa). Residue 195 to 202 participates in ATP binding; the sequence is GPNGMGKS. 2 disordered regions span residues 256 to 275 and 427 to 472; these read LQKS…DDDD and KAAK…APEA. Residues 266–275 are compositionally biased toward acidic residues; it reads ENVDGEDDDD. The span at 437 to 446 shows a compositional bias: basic and acidic residues; it reads QQEKVKDRAK. The 226-residue stretch at 496 to 721 folds into the ABC transporter 2 domain; that stretch reads LQLIEVSFSY…DLQREIKAEV (226 aa). 530–537 is a binding site for ATP; sequence GPNGAGKS.

The protein belongs to the ABC transporter superfamily. ABCF family. EF3 (TC 3.A.1.121) subfamily.

This chain is ABC transporter F family member 4 (ABCF4), found in Arabidopsis thaliana (Mouse-ear cress).